Consider the following 122-residue polypeptide: Large ribosomal subunit protein bL12 (122 aa).

The protein belongs to the bacterial ribosomal protein bL12 family. In terms of assembly, homodimer. Part of the ribosomal stalk of the 50S ribosomal subunit. Forms a multimeric L10(L12)X complex, where L10 forms an elongated spine to which 2 to 4 L12 dimers bind in a sequential fashion. Binds GTP-bound translation factors.

Its function is as follows. Forms part of the ribosomal stalk which helps the ribosome interact with GTP-bound translation factors. Is thus essential for accurate translation. The protein is Large ribosomal subunit protein bL12 of Xylella fastidiosa (strain M12).